We begin with the raw amino-acid sequence, 259 residues long: Proteasome subunit alpha type-7 (259 aa).

This sequence belongs to the peptidase T1A family. As to quaternary structure, the 26S proteasome consists of a 20S proteasome core and two 19S regulatory subunits. The 20S proteasome core is composed of 28 subunits that are arranged in four stacked rings, resulting in a barrel-shaped structure. The two end rings are each formed by seven alpha subunits, and the two central rings are each formed by seven beta subunits. The catalytic chamber with the active sites is on the inside of the barrel.

The protein localises to the cytoplasm. It is found in the nucleus. Functionally, the proteasome is a multicatalytic proteinase complex which is characterized by its ability to cleave peptides with Arg, Phe, Tyr, Leu, and Glu adjacent to the leaving group at neutral or slightly basic pH. The proteasome has an ATP-dependent proteolytic activity. The protein is Proteasome subunit alpha type-7 (PAD1) of Solanum lycopersicum (Tomato).